The following is a 228-amino-acid chain: Adapter protein MecA (228 aa).

The disordered stretch occupies residues 79–98 (GQKNDDSAADQTDDEGTDTQ). Over residues 85–95 (SAADQTDDEGT) the composition is skewed to acidic residues.

Belongs to the MecA family. Homodimer.

Enables the recognition and targeting of unfolded and aggregated proteins to the ClpC protease or to other proteins involved in proteolysis. This is Adapter protein MecA from Lacticaseibacillus casei (strain BL23) (Lactobacillus casei).